Here is a 605-residue protein sequence, read N- to C-terminus: Endonuclease 8-like 3 (605 aa).

Residue Val-2 is the Schiff-base intermediate with DNA; via amino nitrogen of the active site. Residues Asn-192 and Arg-271 each coordinate DNA. The FPG-type zinc-finger motif lies at 247 to 281 (KVYKRPNCGQCHCRITVCRFGDNNRMTYFCPHCQK). The segment at 317–346 (SEEHWTCVVCTLINKPSSKACDACLTSRPI) adopts a RanBP2-type zinc-finger fold. Ser-450 carries the post-translational modification Phosphoserine. Residues 456-477 (ESKLFSPAHKKPKTAQYSSPEL) are disordered. 8 residues coordinate Zn(2+): Cys-507, His-510, Cys-533, Cys-541, Cys-554, His-556, Cys-579, and Cys-587. 2 consecutive GRF-type zinc fingers follow at residues 507 to 550 (CSKH…ADLS) and 554 to 596 (CNHG…AENG).

It belongs to the FPG family. Expressed in keratinocytes and embryonic fibroblasts (at protein level). Also detected in thymus, testis and fetal lung primary fibroblasts.

It is found in the nucleus. It localises to the chromosome. The enzyme catalyses 2'-deoxyribonucleotide-(2'-deoxyribose 5'-phosphate)-2'-deoxyribonucleotide-DNA = a 3'-end 2'-deoxyribonucleotide-(2,3-dehydro-2,3-deoxyribose 5'-phosphate)-DNA + a 5'-end 5'-phospho-2'-deoxyribonucleoside-DNA + H(+). In terms of biological role, DNA glycosylase which prefers single-stranded DNA (ssDNA), or partially ssDNA structures such as bubble and fork structures, to double-stranded DNA (dsDNA). Mediates interstrand cross-link repair in response to replication stress: acts by mediating DNA glycosylase activity, cleaving one of the two N-glycosyl bonds comprising the interstrand cross-link, which avoids the formation of a double-strand break but generates an abasic site that is bypassed by translesion synthesis polymerases. In vitro, displays strong glycosylase activity towards the hydantoin lesions spiroiminodihydantoin (Sp) and guanidinohydantoin (Gh) in both ssDNA and dsDNA; also recognizes FapyA, FapyG, 5-OHU, 5-OHC, 5-OHMH, Tg and 8-oxoA lesions in ssDNA. No activity on 8-oxoG detected. Also shows weak DNA-(apurinic or apyrimidinic site) lyase activity. In vivo, appears to be the primary enzyme involved in removing Sp and Gh from ssDNA in neonatal tissues. This chain is Endonuclease 8-like 3 (NEIL3), found in Homo sapiens (Human).